The following is a 355-amino-acid chain: Ion-translocating oxidoreductase complex subunit D (355 aa).

5 helical membrane-spanning segments follow: residues 13-33 (GKLT…ALAV), 35-55 (VYYF…LALI), 77-97 (VILT…YWVI), 98-118 (LIGT…LGQN), and 128-148 (VVLL…ISLL). Position 186 is an FMN phosphoryl threonine (T186). 5 helical membrane-spanning segments follow: residues 216-236 (AGLG…FLIW), 245-265 (PVAI…FGNA), 267-287 (AVGF…FFIA), 294-314 (PVTP…ICLI), and 318-338 (GNYP…VPLI).

This sequence belongs to the NqrB/RnfD family. As to quaternary structure, the complex is composed of six subunits: RnfA, RnfB, RnfC, RnfD, RnfE and RnfG. It depends on FMN as a cofactor.

Its subcellular location is the cell inner membrane. Functionally, part of a membrane-bound complex that couples electron transfer with translocation of ions across the membrane. This is Ion-translocating oxidoreductase complex subunit D from Actinobacillus succinogenes (strain ATCC 55618 / DSM 22257 / CCUG 43843 / 130Z).